The sequence spans 108 residues: Nucleoid-associated protein BTH_I2220 (108 aa).

This sequence belongs to the YbaB/EbfC family. As to quaternary structure, homodimer.

Its subcellular location is the cytoplasm. The protein resides in the nucleoid. Functionally, binds to DNA and alters its conformation. May be involved in regulation of gene expression, nucleoid organization and DNA protection. The sequence is that of Nucleoid-associated protein BTH_I2220 from Burkholderia thailandensis (strain ATCC 700388 / DSM 13276 / CCUG 48851 / CIP 106301 / E264).